The sequence spans 447 residues: Cysteine--tRNA ligase (447 aa).

Cysteine 28 is a Zn(2+) binding site. Positions 30–40 (PTVYNYIHIGN) match the 'HIGH' region motif. 3 residues coordinate Zn(2+): cysteine 211, histidine 236, and glutamate 240. A 'KMSKS' region motif is present at residues 268-272 (KMSKS). Lysine 271 provides a ligand contact to ATP.

The protein belongs to the class-I aminoacyl-tRNA synthetase family. As to quaternary structure, monomer. Requires Zn(2+) as cofactor.

The protein localises to the cytoplasm. The catalysed reaction is tRNA(Cys) + L-cysteine + ATP = L-cysteinyl-tRNA(Cys) + AMP + diphosphate. The chain is Cysteine--tRNA ligase from Streptococcus agalactiae serotype V (strain ATCC BAA-611 / 2603 V/R).